We begin with the raw amino-acid sequence, 327 residues long: Phenylalanine--tRNA ligase alpha subunit (327 aa).

E252 contributes to the Mg(2+) binding site.

Belongs to the class-II aminoacyl-tRNA synthetase family. Phe-tRNA synthetase alpha subunit type 1 subfamily. In terms of assembly, tetramer of two alpha and two beta subunits. The cofactor is Mg(2+).

The protein localises to the cytoplasm. The catalysed reaction is tRNA(Phe) + L-phenylalanine + ATP = L-phenylalanyl-tRNA(Phe) + AMP + diphosphate + H(+). In Hamiltonella defensa subsp. Acyrthosiphon pisum (strain 5AT), this protein is Phenylalanine--tRNA ligase alpha subunit.